A 500-amino-acid chain; its full sequence is Coiled-coil domain-containing protein 125 (500 aa).

The tract at residues 1–105 is disordered; that stretch reads MSKVPRSSSE…TDSNSELSDE (105 aa). The segment covering 10–23 has biased composition (acidic residues); sequence EAEDIWETEDDMTE. Polar residues predominate over residues 92–101; it reads RLSSTDSNSE. Coiled-coil stretches lie at residues 101–237 and 286–314; these read ELSD…LEAL and STRK…TADA. S492 bears the Phosphoserine mark.

Expressed in many tissues, with highest levels in spleen, thymus and bone marrow.

It localises to the cytoplasm. Functionally, may be involved in the regulation of cell migration. The sequence is that of Coiled-coil domain-containing protein 125 (Ccdc125) from Mus musculus (Mouse).